Reading from the N-terminus, the 480-residue chain is ATP-dependent rRNA helicase RRP3 (480 aa).

2 stretches are compositionally biased toward basic and acidic residues: residues 1 to 17 (MAKA…KEES) and 33 to 46 (DTTK…EPKK). The interval 1–63 (MAKATEKRVK…VEVDESEEQT (63 aa)) is disordered. Residues 64–92 (KTFKDLGVIDSICETCEELKFTKPTPIQA) carry the Q motif motif. The Helicase ATP-binding domain occupies 95–266 (IPYALEGRDI…RASLVDPVRV (172 aa)). ATP is bound at residue 108–115 (AQTGSGKT). Residues 214-217 (DEAD) carry the DEAD box motif. The Helicase C-terminal domain maps to 277-437 (NLLQYMVFCP…SYPLESEAVM (161 aa)). Residues 450 to 480 (AIQEMKGEDGTKKRSKFDKKRRRDEMDIGEQ) form a disordered region. Residues 462-471 (KRSKFDKKRR) are compositionally biased toward basic residues.

Belongs to the DEAD box helicase family. DDX47/RRP3 subfamily. Interacts with the SSU processome.

Its subcellular location is the nucleus. The enzyme catalyses ATP + H2O = ADP + phosphate + H(+). In terms of biological role, ATP-dependent rRNA helicase required for pre-ribosomal RNA processing. Involved in the maturation of the 35S-pre-rRNA and to its cleavage to mature 18S rRNA. This chain is ATP-dependent rRNA helicase RRP3, found in Yarrowia lipolytica (strain CLIB 122 / E 150) (Yeast).